The following is a 309-amino-acid chain: Mitochondrial import receptor subunit TOM34 (309 aa).

Serine 8 carries the phosphoserine modification. TPR repeat units follow at residues 9-42, 51-84, and 85-118; these read VEQL…LQAR, SVLY…VPFS, and IKPL…DNSV. The interval 158–189 is disordered; sequence WNSLPSDNHKETAKTKSKEATATKSRVPSAGD. Serine 160 is subject to Phosphoserine. The span at 164 to 178 shows a compositional bias: basic and acidic residues; the sequence is DNHKETAKTKSKEAT. Residue serine 186 is modified to Phosphoserine. 3 TPR repeats span residues 193–226, 227–260, and 261–294; these read AKAL…SSLE, SATY…DGKN, and VKAF…EPRN. Residue lysine 197 forms a Glycyl lysine isopeptide (Lys-Gly) (interchain with G-Cter in SUMO2) linkage.

This sequence belongs to the Tom34 family. Interacts with HSP90A, VCP, ATP6V1D, KIAA0665, AMPK, and DMAP1 through its TPR repeat. In terms of tissue distribution, isoform 1 is ubiquitously expressed while isoform 2 is expressed only in mature testicular germ cells. Isoform 1 is expressed in all testicular cells. Isoform 2 is highly expressed in early to late pachytene cells but expression is significantly decreased in round spermatid cells.

Its subcellular location is the cytoplasm. It is found in the mitochondrion outer membrane. Plays a role in the import of cytosolically synthesized preproteins into mitochondria. Binds the mature portion of precursor proteins. Interacts with cellular components, and possesses weak ATPase activity. May be a chaperone-like protein that helps to keep newly synthesized precursors in an unfolded import compatible state. The chain is Mitochondrial import receptor subunit TOM34 (Tomm34) from Mus musculus (Mouse).